The sequence spans 357 residues: Protein RecA (357 aa).

Residue 69-76 (GPESSGKT) coordinates ATP. The tract at residues 337–357 (SANSVAKNNEDDEDEDVEEEE) is disordered. A compositionally biased stretch (acidic residues) spans 346–357 (EDDEDEDVEEEE).

The protein belongs to the RecA family.

It localises to the cytoplasm. Its function is as follows. Can catalyze the hydrolysis of ATP in the presence of single-stranded DNA, the ATP-dependent uptake of single-stranded DNA by duplex DNA, and the ATP-dependent hybridization of homologous single-stranded DNAs. It interacts with LexA causing its activation and leading to its autocatalytic cleavage. This chain is Protein RecA, found in Nostoc sp. (strain PCC 7120 / SAG 25.82 / UTEX 2576).